Consider the following 274-residue polypeptide: NH(3)-dependent NAD(+) synthetase (274 aa).

An ATP-binding site is contributed by 46 to 53; that stretch reads GISGGQDS. Position 52 (aspartate 52) interacts with Mg(2+). Arginine 140 is a deamido-NAD(+) binding site. Threonine 160 serves as a coordination point for ATP. Residue glutamate 165 participates in Mg(2+) binding. Lysine 173 and aspartate 180 together coordinate deamido-NAD(+). Lysine 189 and threonine 211 together coordinate ATP. Residue 260 to 261 coordinates deamido-NAD(+); it reads HK.

This sequence belongs to the NAD synthetase family. Homodimer.

It carries out the reaction deamido-NAD(+) + NH4(+) + ATP = AMP + diphosphate + NAD(+) + H(+). It participates in cofactor biosynthesis; NAD(+) biosynthesis; NAD(+) from deamido-NAD(+) (ammonia route): step 1/1. Its function is as follows. Catalyzes the ATP-dependent amidation of deamido-NAD to form NAD. Uses ammonia as a nitrogen source. The protein is NH(3)-dependent NAD(+) synthetase of Listeria monocytogenes serotype 4b (strain CLIP80459).